The sequence spans 317 residues: Probable cell division protein WhiA (317 aa).

The segment at residues 278–311 is a DNA-binding region (H-T-H motif); that stretch reads SLQGLGELLDPQVGKSGVNHRLRKIGEKADELRQ.

Belongs to the WhiA family.

Involved in cell division and chromosome segregation. This Lachnospira eligens (strain ATCC 27750 / DSM 3376 / VPI C15-48 / C15-B4) (Eubacterium eligens) protein is Probable cell division protein WhiA.